The primary structure comprises 79 residues: Protein S100-G (79 aa).

S2 bears the N-acetylserine mark. 2 consecutive EF-hand domains span residues 13–48 and 45–79; these read IFEK…KGPN and KGPN…KISQ. 2 residues coordinate Ca(2+): Q26 and E31. Phosphoserine is present on S42. Ca(2+) is bound by residues D58, N60, D62, E64, and E69.

Belongs to the S-100 family.

This chain is Protein S100-G (S100G), found in Homo sapiens (Human).